A 158-amino-acid polypeptide reads, in one-letter code: Transcription elongation factor GreA (158 aa).

Residues 4-75 are a coiled coil; the sequence is EKTYPMTQEG…TQLENMIRNA (72 aa).

It belongs to the GreA/GreB family.

Necessary for efficient RNA polymerase transcription elongation past template-encoded arresting sites. The arresting sites in DNA have the property of trapping a certain fraction of elongating RNA polymerases that pass through, resulting in locked ternary complexes. Cleavage of the nascent transcript by cleavage factors such as GreA or GreB allows the resumption of elongation from the new 3'terminus. GreA releases sequences of 2 to 3 nucleotides. This is Transcription elongation factor GreA from Bacillus anthracis (strain A0248).